Consider the following 119-residue polypeptide: gSG7 salivary protein (119 aa).

2 cysteine pairs are disulfide-bonded: Cys-58–Cys-113 and Cys-81–Cys-91.

It localises to the secreted. Its activity is regulated as follows. The activity is increased in the presence of host properdin (CFP). Functionally, salivary protein that inhibits the alternative pathway of complement system activation in the host while having no inhibitory effect on the classical pathway. Inhibits activity of activated host C3-convertase complex C3bBb (C3-CFB). Enhances accumulation of C3bBb on immobilized properdin. The protein is gSG7 salivary protein of Anopheles freeborni (Western malaria mosquito).